The sequence spans 806 residues: Acetyl-CoA decarbonylase/synthase complex subunit alpha 1 (806 aa).

The [4Fe-4S] cluster site is built by Cys73, Cys76, Cys77, Cys79, Cys84, and Cys94. CO is bound at residue His117. His250, Cys278, and Cys323 together coordinate [Ni-4Fe-4S] cluster. 2 consecutive 4Fe-4S ferredoxin-type domains span residues 407–436 and 445–475; these read DEQMKEWVDKCADCGSCYLVCPEELEIPEA and YSYLVDLHDQCIGCRRCEQVCKKEIPILSVI. The [4Fe-4S] cluster site is built by Cys417, Cys420, Cys423, Cys427, Cys455, Cys458, Cys461, and Cys465. Residues Cys523, Cys552, and Cys587 each contribute to the [Ni-4Fe-4S] cluster site.

It belongs to the Ni-containing carbon monoxide dehydrogenase family. As to quaternary structure, heterotetramer of two alpha and two epsilon subunits. The ACDS complex is made up of alpha, epsilon, beta, gamma and delta subunits with a probable stoichiometry of (alpha(2)epsilon(2))(4)-beta(8)-(gamma(1)delta(1))(8). [4Fe-4S] cluster serves as cofactor. The cofactor is [Ni-4Fe-4S] cluster.

It catalyses the reaction CO + 2 oxidized [2Fe-2S]-[ferredoxin] + H2O = 2 reduced [2Fe-2S]-[ferredoxin] + CO2 + 2 H(+). It functions in the pathway one-carbon metabolism; methanogenesis from acetate. In terms of biological role, part of the ACDS complex that catalyzes the reversible cleavage of acetyl-CoA, allowing growth on acetate as sole source of carbon and energy. The alpha-epsilon subcomponent functions as a carbon monoxide dehydrogenase. The protein is Acetyl-CoA decarbonylase/synthase complex subunit alpha 1 of Methanosarcina thermophila.